Reading from the N-terminus, the 62-residue chain is UPF0291 protein CLB_2550 (62 aa).

Belongs to the UPF0291 family.

It localises to the cytoplasm. This Clostridium botulinum (strain ATCC 19397 / Type A) protein is UPF0291 protein CLB_2550.